The chain runs to 200 residues: ATP-dependent Clp protease proteolytic subunit (200 aa).

The Nucleophile role is filled by Ser-99. His-124 is an active-site residue.

The protein belongs to the peptidase S14 family. As to quaternary structure, fourteen ClpP subunits assemble into 2 heptameric rings which stack back to back to give a disk-like structure with a central cavity, resembling the structure of eukaryotic proteasomes.

The protein resides in the cytoplasm. It carries out the reaction Hydrolysis of proteins to small peptides in the presence of ATP and magnesium. alpha-casein is the usual test substrate. In the absence of ATP, only oligopeptides shorter than five residues are hydrolyzed (such as succinyl-Leu-Tyr-|-NHMec, and Leu-Tyr-Leu-|-Tyr-Trp, in which cleavage of the -Tyr-|-Leu- and -Tyr-|-Trp bonds also occurs).. Cleaves peptides in various proteins in a process that requires ATP hydrolysis. Has a chymotrypsin-like activity. Plays a major role in the degradation of misfolded proteins. This Syntrophomonas wolfei subsp. wolfei (strain DSM 2245B / Goettingen) protein is ATP-dependent Clp protease proteolytic subunit.